Reading from the N-terminus, the 560-residue chain is Membrane protein insertase YidC (560 aa).

The next 6 membrane-spanning stretches (helical) occupy residues 5–25 (IINL…WQYF), 334–354 (AIDF…MNFF), 357–377 (YVGN…LLMF), 431–451 (LPIL…YVTI), 476–496 (LFGL…WPIL), and 522–542 (FMPL…LIYW).

The protein belongs to the OXA1/ALB3/YidC family. Type 1 subfamily. As to quaternary structure, interacts with the Sec translocase complex via SecD. Specifically interacts with transmembrane segments of nascent integral membrane proteins during membrane integration.

Its subcellular location is the cell inner membrane. Required for the insertion and/or proper folding and/or complex formation of integral membrane proteins into the membrane. Involved in integration of membrane proteins that insert both dependently and independently of the Sec translocase complex, as well as at least some lipoproteins. Aids folding of multispanning membrane proteins. The polypeptide is Membrane protein insertase YidC (Rickettsia conorii (strain ATCC VR-613 / Malish 7)).